The following is a 344-amino-acid chain: MRVADFDFELPPDLIAQFPPDVRGASRLLHVTAAGALHDRMFRELPTLLGADDLLVMNDTRVIKARLFGEKDSGGRVELLVERVTGEFEALAFIRASHAPKPGARIRLADDVALDVLDKQHDLTRLHFPAPVLDVLDRCGRLPLPPYIEHAPTEEDEARYQTVYANEPGAVAAPTAGLHFDAAMLGTLQTQGVRTARVTLHVGAGTFQPVRVAEVADHVMHSERYTVPAATVAAIAETRARGGRVVAVGTTSLRALEAASASGSVEAGVGETAIFITPGYRFRTVDALVTNFHLPRSTLLMLVSAFSGIETIRRAYAHAIAERYRFFSYGDAMFLEKASLETPA.

Belongs to the QueA family. Monomer.

The protein localises to the cytoplasm. The enzyme catalyses 7-aminomethyl-7-carbaguanosine(34) in tRNA + S-adenosyl-L-methionine = epoxyqueuosine(34) in tRNA + adenine + L-methionine + 2 H(+). It functions in the pathway tRNA modification; tRNA-queuosine biosynthesis. Its function is as follows. Transfers and isomerizes the ribose moiety from AdoMet to the 7-aminomethyl group of 7-deazaguanine (preQ1-tRNA) to give epoxyqueuosine (oQ-tRNA). The sequence is that of S-adenosylmethionine:tRNA ribosyltransferase-isomerase from Thiobacillus denitrificans (strain ATCC 25259 / T1).